Consider the following 765-residue polypeptide: Myotubularin-related protein 10-A (765 aa).

In terms of domain architecture, Myotubularin phosphatase spans 209–650 (FETYSDWDRE…THIKLWKLCY (442 aa)).

The protein belongs to the protein-tyrosine phosphatase family. Non-receptor class myotubularin subfamily.

The sequence is that of Myotubularin-related protein 10-A (mtmr10-a) from Xenopus laevis (African clawed frog).